Consider the following 92-residue polypeptide: Protease inhibitors (92 aa).

Positions 1-19 (MKFALALCAAVLLVVLVQA) are cleaved as a signal peptide. 2 consecutive Pacifastin domains span residues 20–54 (EEKCTPGQVKQQDCNTCTCTPTGVWGCTRKGCQPA) and 57–92 (EISCEPGKTFKDKCNTCRCGADGKSAACTLKACPNQ). Cystine bridges form between Cys-23–Cys-38, Cys-33–Cys-51, Cys-36–Cys-46, Cys-60–Cys-75, Cys-70–Cys-89, and Cys-73–Cys-84. A glycan (O-linked (Fuc) threonine) is linked at Thr-65.

Belongs to the protease inhibitor I19 family. In terms of tissue distribution, brain and fat body.

It localises to the secreted. Its function is as follows. Both LCMI I and II are inhibitors of chymotrypsin and elastase (in vitro). They both inhibit the prophenol oxidase activation cascade. The chain is Protease inhibitors from Locusta migratoria (Migratory locust).